The chain runs to 297 residues: UDP-N-acetylenolpyruvoylglucosamine reductase (297 aa).

Positions 18–184 constitute an FAD-binding PCMH-type domain; sequence QVGGPAEWYL…LSARLRLAPG (167 aa). Arg163 is a catalytic residue. The active-site Proton donor is the Ser214. Residue Glu285 is part of the active site.

The cofactor is FAD.

The protein localises to the cytoplasm. It carries out the reaction UDP-N-acetyl-alpha-D-muramate + NADP(+) = UDP-N-acetyl-3-O-(1-carboxyvinyl)-alpha-D-glucosamine + NADPH + H(+). Its pathway is cell wall biogenesis; peptidoglycan biosynthesis. Cell wall formation. This is UDP-N-acetylenolpyruvoylglucosamine reductase from Gloeobacter violaceus (strain ATCC 29082 / PCC 7421).